We begin with the raw amino-acid sequence, 839 residues long: A disintegrin and metalloproteinase with thrombospondin motifs 4 (839 aa).

Positions 1–51 are cleaved as a signal peptide; it reads MSHMDSHPGRGLADGWLWGIQPRLLLPTVPVSGSRLVWLLLLASLLPSAWP. The propeptide occupies 52-212; that stretch reads ASPLPREEEI…PSPSPRRAKR (161 aa). Asn-68 carries N-linked (GlcNAc...) asparagine glycosylation. The interval 166–209 is disordered; sequence EGGAPNSAGGPGAHILRRKSPVSGQGPMCNVKAPPGKPSPSPRR. The Cysteine switch signature appears at 192–199; the sequence is PMCNVKAP. A Zn(2+)-binding site is contributed by Cys-194. Positions 218-428 constitute a Peptidase M12B domain; it reads RFVETLVVAD…GFGHCLLDKP (211 aa). 11 disulfide bridges follow: Cys-293-Cys-345, Cys-322-Cys-327, Cys-339-Cys-423, Cys-377-Cys-407, Cys-449-Cys-472, Cys-460-Cys-482, Cys-467-Cys-501, Cys-495-Cys-506, Cys-532-Cys-569, Cys-536-Cys-574, and Cys-547-Cys-559. Residue His-361 coordinates Zn(2+). Glu-362 is an active-site residue. His-365 and His-371 together coordinate Zn(2+). The 83-residue stretch at 437–519 folds into the Disintegrin domain; it reads TFPGKDYDAD…DQLQAFNVPQ (83 aa). Positions 520-575 constitute a TSP type-1 domain; the sequence is AGGWGPWGSWGDCSRSCGGGVQFSSRDCTRPVPRNGGKYCEGRRTRFRSCNTQDCP. Residues 686–839 are spacer; the sequence is SKQSGSFKKF…LRRRSWAGRK (154 aa).

As to quaternary structure, interacts with SRPX2. Zn(2+) serves as cofactor. In terms of processing, the precursor is cleaved by a furin endopeptidase. Glycosylated. Can be O-fucosylated by POFUT2 on a serine or a threonine residue found within the consensus sequence C1-X(2)-(S/T)-C2-G of the TSP type-1 repeat domains where C1 and C2 are the first and second cysteine residue of the repeat, respectively. Fucosylated repeats can then be further glycosylated by the addition of a beta-1,3-glucose residue by the glucosyltransferase, B3GALTL. Fucosylation mediates the efficient secretion of ADAMTS family members. Can also be C-glycosylated with one or two mannose molecules on tryptophan residues within the consensus sequence W-X-X-W of the TPRs, and N-glycosylated. These other glycosylations can also facilitate secretion.

The protein resides in the secreted. It localises to the extracellular space. The protein localises to the extracellular matrix. It catalyses the reaction Glutamyl endopeptidase. Bonds cleaved include 370-Thr-Glu-Gly-Glu-|-Ala-Arg-Gly-Ser-377 in the interglobular domain of mammalian aggrecan.. Functionally, cleaves aggrecan, a cartilage proteoglycan, at the '392-Glu-|-Ala-393' site and may be involved in its turnover. Also cleaves COMP. May play an important role in the destruction of aggrecan in arthritic diseases. This Bos taurus (Bovine) protein is A disintegrin and metalloproteinase with thrombospondin motifs 4 (ADAMTS4).